Consider the following 275-residue polypeptide: Methylglyoxal reductase DkgA (275 aa).

The active-site Proton donor is the tyrosine 51. Histidine 107 serves as a coordination point for substrate. 187–241 (SPLAQGGKGVFDQKVIRDLADKYGKTPAQIVIRWHLDSGLVVIPKSVTPSRIAEN) contacts NADP(+).

The protein belongs to the aldo/keto reductase family. As to quaternary structure, monomer.

Its subcellular location is the cytoplasm. It carries out the reaction hydroxyacetone + NADP(+) = methylglyoxal + NADPH + H(+). Functionally, aldo-keto reductase that significantly contributes to cellular methylglyoxal detoxification by catalyzing the NADPH-dependent conversion of methylglyoxal to acetol. In Escherichia coli O157:H7, this protein is Methylglyoxal reductase DkgA.